Here is an 881-residue protein sequence, read N- to C-terminus: Serine/threonine-protein kinase/endoribonuclease IRE1b (881 aa).

An N-terminal signal peptide occupies residues 1-21 (MRGSALLDLILFLLVSPLAHS). At 22–357 (FKGSEISKFY…KQAGFASKFS (336 aa)) the chain is on the lumenal side. N115 is a glycosylation site (N-linked (GlcNAc...) asparagine). A helical transmembrane segment spans residues 358 to 378 (GLIVLIFGFCVTMLSVCGLFF). Over 379–881 (YRLRQSIRIK…FFKYSKTTVF (503 aa)) the chain is Cytoplasmic. One can recognise a Protein kinase domain in the interval 459 to 744 (FVSNKEIAKG…AQDVMHHPLF (286 aa)). ATP is bound by residues 465-473 (IAKGSNGTV) and K487. Positions 481-502 (GRLVAVKRLVQSHHDVAQKEIL) are ATP selon article. Catalysis depends on D608, which acts as the Proton acceptor. Residues 642-661 (LTRNSTGLGSGSSGWQAPEQ) are disordered. The KEN domain maps to 747-878 (SDMRLSFLRD…EEFFFKYSKT (132 aa)).

It belongs to the protein kinase superfamily. Ser/Thr protein kinase family. Homodimer; disulfide-linked. Dimer formation is driven by hydrophobic interactions within the N-terminal luminal domains and stabilized by disulfide bridges. The cofactor is Mg(2+). Post-translationally, autophosphorylated. As to expression, ubiquitous. Detected in the apical meristem, at leaf margins where vascular bundles end, in the anthers before pollen is formed and in the ovules at a very early stage of development. There is no expression in more mature embryos. Also strongly expressed in the cotyledons immediately after germination but not later on.

It localises to the endoplasmic reticulum membrane. It carries out the reaction L-seryl-[protein] + ATP = O-phospho-L-seryl-[protein] + ADP + H(+). The enzyme catalyses L-threonyl-[protein] + ATP = O-phospho-L-threonyl-[protein] + ADP + H(+). The kinase domain is activated by trans-autophosphorylation. Kinase activity is required for activation of the endoribonuclease domain. Senses unfolded proteins in the lumen of the endoplasmic reticulum via its N-terminal domain which leads to enzyme auto-activation. The active endoribonuclease domain splices bZIP60 mRNA to generate a new C-terminus, converting it into a potent unfolded-protein response transcriptional activator which then induces transcription of UPR target genes. Involved in organ growth regulation. Plays a role in plant immunity and abiotic stress responses. Required for ER stress-induced autophagy. In Arabidopsis thaliana (Mouse-ear cress), this protein is Serine/threonine-protein kinase/endoribonuclease IRE1b (IRE1B).